The chain runs to 362 residues: Heat-inducible transcription repressor HrcA (362 aa).

The protein belongs to the HrcA family.

In terms of biological role, negative regulator of class I heat shock genes (grpE-dnaK-dnaJ and groELS operons). Prevents heat-shock induction of these operons. The chain is Heat-inducible transcription repressor HrcA from Rhodopseudomonas palustris (strain ATCC BAA-98 / CGA009).